Consider the following 530-residue polypeptide: Bifunctional purine biosynthesis protein PurH (530 aa).

In terms of domain architecture, MGS-like spans 1–148 (MNNARPIRRA…KNHKDVTIVV (148 aa)).

This sequence belongs to the PurH family.

The enzyme catalyses (6R)-10-formyltetrahydrofolate + 5-amino-1-(5-phospho-beta-D-ribosyl)imidazole-4-carboxamide = 5-formamido-1-(5-phospho-D-ribosyl)imidazole-4-carboxamide + (6S)-5,6,7,8-tetrahydrofolate. It catalyses the reaction IMP + H2O = 5-formamido-1-(5-phospho-D-ribosyl)imidazole-4-carboxamide. It participates in purine metabolism; IMP biosynthesis via de novo pathway; 5-formamido-1-(5-phospho-D-ribosyl)imidazole-4-carboxamide from 5-amino-1-(5-phospho-D-ribosyl)imidazole-4-carboxamide (10-formyl THF route): step 1/1. Its pathway is purine metabolism; IMP biosynthesis via de novo pathway; IMP from 5-formamido-1-(5-phospho-D-ribosyl)imidazole-4-carboxamide: step 1/1. The protein is Bifunctional purine biosynthesis protein PurH of Aliivibrio fischeri (strain ATCC 700601 / ES114) (Vibrio fischeri).